A 54-amino-acid polypeptide reads, in one-letter code: Putative ankyrin repeat protein RC0701 (54 aa).

One copy of the ANK repeat lies at 17-46 (SGKTPLDWYSDYNATKIVETLIKNGGNVSS).

The chain is Putative ankyrin repeat protein RC0701 from Rickettsia conorii (strain ATCC VR-613 / Malish 7).